The sequence spans 163 residues: COP9 signalosome complex subunit 9 (163 aa).

In terms of domain architecture, PCI spans Glu5–Arg120.

Component of a COP9 signalosome-like (CSN) complex.

It localises to the cytoplasm. The protein resides in the nucleus. Component of the COP9 signalosome (CSN) complex that acts as a regulator of the ubiquitin (Ubl) conjugation pathway by mediating the deneddylation of the cullin subunit of SCF-type E3 ubiquitin-protein ligase complexes. The complex is involved in the regulation of the mating pheromone response. The polypeptide is COP9 signalosome complex subunit 9 (CSN9) (Eremothecium gossypii (strain ATCC 10895 / CBS 109.51 / FGSC 9923 / NRRL Y-1056) (Yeast)).